The primary structure comprises 438 residues: Adenylyltransferase and sulfurtransferase UBA4 (438 aa).

ATP contacts are provided by residues glycine 81, aspartate 102, 109–113, lysine 126, and 170–171; these read SNLHR and DH. Zn(2+)-binding residues include cysteine 212 and cysteine 215. Cysteine 229 functions as the Glycyl thioester intermediate; for adenylyltransferase activity in the catalytic mechanism. Residues cysteine 290 and cysteine 293 each contribute to the Zn(2+) site. The region spanning 340 to 436 is the Rhodanese domain; the sequence is NKKKHILIDV…WSDDVDSKIP (97 aa). Catalysis depends on cysteine 396, which acts as the Cysteine persulfide intermediate; for sulfurtransferase activity.

It in the N-terminal section; belongs to the HesA/MoeB/ThiF family. UBA4 subfamily. Requires Zn(2+) as cofactor.

The protein resides in the cytoplasm. The protein localises to the cytosol. It functions in the pathway tRNA modification; 5-methoxycarbonylmethyl-2-thiouridine-tRNA biosynthesis. Plays a central role in 2-thiolation of mcm(5)S(2)U at tRNA wobble positions of cytosolic tRNA(Lys), tRNA(Glu) and tRNA(Gln). Acts by mediating the C-terminal thiocarboxylation of sulfur carrier URM1. Its N-terminus first activates URM1 as acyl-adenylate (-COAMP), then the persulfide sulfur on the catalytic cysteine is transferred to URM1 to form thiocarboxylation (-COSH) of its C-terminus. The reaction probably involves hydrogen sulfide that is generated from the persulfide intermediate and that acts as a nucleophile towards URM1. Subsequently, a transient disulfide bond is formed. Does not use thiosulfate as sulfur donor; NFS1 probably acting as a sulfur donor for thiocarboxylation reactions. Prior mcm(5) tRNA modification by the elongator complex is required for 2-thiolation. May also be involved in protein urmylation. This is Adenylyltransferase and sulfurtransferase UBA4 from Candida albicans (strain SC5314 / ATCC MYA-2876) (Yeast).